A 519-amino-acid chain; its full sequence is Cilia- and flagella-associated protein 157 (519 aa).

Over residues 1-11 (MPPKKKGKRGP) the composition is skewed to basic residues. A disordered region spans residues 1–25 (MPPKKKGKRGPSAKTKEKETVRVAS). Coiled coils occupy residues 28-185 (VTEQ…EKKV) and 241-356 (IELI…QRTL).

It belongs to the CFAP157 family.

It localises to the cytoplasm. It is found in the cytoskeleton. Its subcellular location is the cilium basal body. In terms of biological role, specifically required during spermatogenesis for flagellum morphogenesis and sperm motility. This is Cilia- and flagella-associated protein 157 from Xenopus tropicalis (Western clawed frog).